A 438-amino-acid polypeptide reads, in one-letter code: GTPase Obg (438 aa).

The Obg domain occupies 6–164 (AEFVDRVKIF…RWLELELKIL (159 aa)). An OBG-type G domain is found at 165 to 335 (ADVGLVGYPN…LLDRVASIVR (171 aa)). GTP is bound by residues 171–178 (GYPNVGKS), 196–200 (FTTLV), 217–220 (DIPG), 287–290 (NKID), and 316–318 (SAV). Residues S178 and T198 each coordinate Mg(2+). One can recognise an OCT domain in the interval 358-438 (VWRKLPERFE…IGNFEFEYRE (81 aa)).

It belongs to the TRAFAC class OBG-HflX-like GTPase superfamily. OBG GTPase family. In terms of assembly, monomer. The cofactor is Mg(2+).

The protein resides in the cytoplasm. An essential GTPase which binds GTP, GDP and possibly (p)ppGpp with moderate affinity, with high nucleotide exchange rates and a fairly low GTP hydrolysis rate. Plays a role in control of the cell cycle, stress response, ribosome biogenesis and in those bacteria that undergo differentiation, in morphogenesis control. This chain is GTPase Obg, found in Thermotoga neapolitana (strain ATCC 49049 / DSM 4359 / NBRC 107923 / NS-E).